The chain runs to 336 residues: 3-isopropylmalate dehydrogenase (336 aa).

The substrate site is built by R87, R97, R121, and D211. 3 residues coordinate Mg(2+): D211, D235, and D239. Residue 271–283 (GSAPDIAGQGIAD) coordinates NAD(+).

It belongs to the isocitrate and isopropylmalate dehydrogenases family. LeuB type 2 subfamily. In terms of assembly, homodimer. It depends on Mg(2+) as a cofactor. Mn(2+) serves as cofactor.

The protein localises to the cytoplasm. It catalyses the reaction (2R,3S)-3-isopropylmalate + NAD(+) = 4-methyl-2-oxopentanoate + CO2 + NADH. It functions in the pathway amino-acid biosynthesis; L-leucine biosynthesis; L-leucine from 3-methyl-2-oxobutanoate: step 3/4. Its function is as follows. Catalyzes the oxidation of 3-carboxy-2-hydroxy-4-methylpentanoate (3-isopropylmalate) to 3-carboxy-4-methyl-2-oxopentanoate. The product decarboxylates to 4-methyl-2 oxopentanoate. This Rhodococcus jostii (strain RHA1) protein is 3-isopropylmalate dehydrogenase.